Here is a 122-residue protein sequence, read N- to C-terminus: S-adenosylmethionine decarboxylase proenzyme (122 aa).

Residue Ser69 is the Schiff-base intermediate with substrate; via pyruvic acid of the active site. The residue at position 69 (Ser69) is a Pyruvic acid (Ser); by autocatalysis. Catalysis depends on His74, which acts as the Proton acceptor; for processing activity. Cys89 serves as the catalytic Proton donor; for catalytic activity.

It belongs to the prokaryotic AdoMetDC family. Type 1 subfamily. In terms of assembly, heterotetramer of two alpha and two beta chains arranged as a dimer of alpha/beta heterodimers. Pyruvate serves as cofactor. Post-translationally, is synthesized initially as an inactive proenzyme. Formation of the active enzyme involves a self-maturation process in which the active site pyruvoyl group is generated from an internal serine residue via an autocatalytic post-translational modification. Two non-identical subunits are generated from the proenzyme in this reaction, and the pyruvate is formed at the N-terminus of the alpha chain, which is derived from the carboxyl end of the proenzyme. The post-translation cleavage follows an unusual pathway, termed non-hydrolytic serinolysis, in which the side chain hydroxyl group of the serine supplies its oxygen atom to form the C-terminus of the beta chain, while the remainder of the serine residue undergoes an oxidative deamination to produce ammonia and the pyruvoyl group blocking the N-terminus of the alpha chain.

It catalyses the reaction S-adenosyl-L-methionine + H(+) = S-adenosyl 3-(methylsulfanyl)propylamine + CO2. It functions in the pathway amine and polyamine biosynthesis; S-adenosylmethioninamine biosynthesis; S-adenosylmethioninamine from S-adenosyl-L-methionine: step 1/1. Functionally, catalyzes the decarboxylation of S-adenosylmethionine to S-adenosylmethioninamine (dcAdoMet), the propylamine donor required for the synthesis of the polyamines spermine and spermidine from the diamine putrescine. The sequence is that of S-adenosylmethionine decarboxylase proenzyme from Sulfurisphaera tokodaii (strain DSM 16993 / JCM 10545 / NBRC 100140 / 7) (Sulfolobus tokodaii).